Here is a 2153-residue protein sequence, read N- to C-terminus: RNA-directed RNA polymerase L (2153 aa).

H36, E54, D97, E110, and V111 together coordinate Mn(2+). K124 serves as the catalytic For endonuclease activity. The region spanning 957–1143 (TGKSIKFKRK…AINQEMWKSM (187 aa)) is the RdRp catalytic domain. D1100 serves as a coordination point for Mg(2+).

The protein belongs to the Bunyavirales RNA polymerase family. In terms of assembly, interacts with the viral nucleoprotein. Mn(2+) serves as cofactor. The cofactor is Mg(2+).

The protein localises to the host cytoplasm. Its subcellular location is the host perinuclear region. The catalysed reaction is RNA(n) + a ribonucleoside 5'-triphosphate = RNA(n+1) + diphosphate. Functionally, RNA-dependent RNA polymerase, which is responsible for the replication and transcription of the viral RNA genome using antigenomic RNA as an intermediate. During transcription, synthesizes subgenomic RNAs and assures their capping by a cap-snatching mechanism, which involves the endonuclease activity cleaving the host capped pre-mRNAs. These short capped RNAs are then used as primers for viral transcription. Cleaves ssRNA substrates but not DNA. Seems to downregulate the expression of its own and heterologous mRNAs through its endonuclease activity. This chain is RNA-directed RNA polymerase L, found in Abrothrix longipilis (Long-haired grass mouse).